The primary structure comprises 270 residues: uncharacterized protein (270 aa).

A disordered region spans residues 235-270 (LADSDLEADSDDSESFEFVENPEPSENGSEPTIKND). The segment covering 238 to 251 (SDLEADSDDSESFE) has biased composition (acidic residues). Positions 255 to 270 (NPEPSENGSEPTIKND) are enriched in low complexity.

This is an uncharacterized protein from Halorubrum sp. PV6 (HRPV-1).